The sequence spans 170 residues: CCHC-type zinc finger nucleic acid binding protein (170 aa).

Position 2 is an N-acetylserine (S2). Residues 4–21 (NECFKCGRSGHWARECPT) form a CCHC-type 1 zinc finger. K8 carries the N6-acetyllysine modification. Omega-N-methylarginine; by PRMT1 is present on residues R25 and R27. Positions 25-33 (RGRGMRSRG) are RNA-binding Arg/Gly-rich region (RGG-box). A Phosphoserine modification is found at S42. 6 consecutive CCHC-type zinc fingers follow at residues 45–62 (DICYRCGESGHLAKDCDL), 65–82 (DACYNCGRGGHIAKDCKE), 89–106 (QCCYNCGKPGHLARDCDH), 110–127 (QKCYSCGEFGHIQKDCTK), 128–145 (VKCYRCGETGHVAINCSK), and 149–166 (VNCYRCGESGHLARECTI). Residue R72 is modified to Omega-N-methylarginine.

As to quaternary structure, associates with the 40S ribosomal subunit, the 80S ribosome and with polysomes. Post-translationally, arginine methylation by PRMT1 in the Arg/Gly-rich region impedes RNA binding.

It is found in the nucleus. The protein resides in the cytoplasm. Its subcellular location is the endoplasmic reticulum. In terms of biological role, single-stranded DNA-binding protein that preferentially binds to the sterol regulatory element (SRE) sequence 5'-GTGCGGTG-3', and thereby mediates transcriptional repression. Has a role as transactivator of the Myc promoter. Binds single-stranded RNA in a sequence-specific manner. Binds G-rich elements in target mRNA coding sequences. Prevents G-quadruplex structure formation in vitro, suggesting a role in supporting translation by resolving stable structures on mRNAs. The sequence is that of CCHC-type zinc finger nucleic acid binding protein (CNBP) from Bos taurus (Bovine).